Reading from the N-terminus, the 205-residue chain is EQQKFSPRYIELVVVADHGMFKKYNSNLNTIRKWVHEMVNSMNGFYRSVDVTASLANLEVWSKKDLINVQKDSRETLKSFGEWRERDLLPRISHDNAQLLTAIVFDGHTIGRAYTGGMCDPRHSVGVVMDHSPKNLQVAVTMAHELGHNLGMHHDGNQCHCDAASCIMADSLSVVLSYEFSDCSQNQYQTYLTKHNPQCILNEPL.

Residues 8–204 enclose the Peptidase M12B domain; it reads RYIELVVVAD…HNPQCILNEP (197 aa). Ca(2+)-binding residues include glutamate 11 and aspartate 95. Cystine bridges form between cysteine 119–cysteine 199, cysteine 159–cysteine 183, and cysteine 161–cysteine 166. A Zn(2+)-binding site is contributed by histidine 144. Glutamate 145 is a catalytic residue. Zn(2+) contacts are provided by histidine 148 and histidine 154. The Ca(2+) site is built by cysteine 199 and asparagine 202.

Belongs to the venom metalloproteinase (M12B) family. P-I subfamily. As to quaternary structure, monomer. Requires Zn(2+) as cofactor. As to expression, expressed by the venom gland.

The protein localises to the secreted. With respect to regulation, inhibited by EDTA. Not inhibited by the serine proteinase inhibitors aprotinin and benzamidine. Its function is as follows. Snake venom zinc metalloproteinase that cleaves the alpha chain of fibrinogen (FGA) first followed by the beta chain (FGB) and shows no effect on the gamma chain. Cleaves only the beta chain of fibrin, leaving the gamma-dimer untouched. Shows proteolytic activity towards azocasein. Causes defibrinogenation when intraperitoneally administered on mice. This Bothrops moojeni (Lance-headed viper) protein is Snake venom metalloproteinase BmooMPalpha-I.